The primary structure comprises 929 residues: Protein unc-45 homolog A (929 aa).

TPR repeat units lie at residues 6-39 (VEQL…DATP), 43-76 (AVLH…DGGD), and 77-110 (VKAL…EPKN). Lys-55 bears the N6-acetyllysine mark. Lys-468 is modified (N6-acetyllysine).

As to quaternary structure, interacts with PGR isoforms A and B as well as with NR3C1 in the absence of ligand, and with HSP90AB1. Binding to HSP90AB1 involves 2 UNC45A monomers per HSP90AB1 dimer.

The protein localises to the cytoplasm. The protein resides in the perinuclear region. It localises to the nucleus. In terms of biological role, may act as co-chaperone for HSP90 (Potential). Prevents the stimulation of HSP90AB1 ATPase activity by AHSA1. Positive factor in promoting PGR function in the cell. May be necessary for proper folding of myosin (Potential). Necessary for normal cell proliferation. Necessary for normal myotube formation and myosin accumulation during muscle cell development. May play a role in erythropoiesis in stroma cells in the spleen. In Pongo abelii (Sumatran orangutan), this protein is Protein unc-45 homolog A (UNC45A).